A 609-amino-acid polypeptide reads, in one-letter code: Sporulation-specific protein 21 (609 aa).

Disordered stretches follow at residues 1-50 (MDNI…LENS), 68-96 (PASK…DGNS), and 124-165 (KLDS…SIKG). Positions 10-31 (MEGTSTMTVTSRSSEDSSCISN) are enriched in polar residues. A compositionally biased stretch (basic and acidic residues) spans 32 to 43 (HEQDTDTHKDGD). Residues 68–81 (PASKSSRSIGSMKS) are compositionally biased toward low complexity. Composition is skewed to polar residues over residues 82 to 96 (NQSL…DGNS) and 127 to 136 (STGSQRSKNN). The span at 143–159 (SSTTSQTTCSSSSSSSS) shows a compositional bias: low complexity. Coiled-coil stretches lie at residues 283–342 (RTKI…DNES), 357–393 (RETL…ATNF), and 424–483 (ENLT…LLIE). The interval 586–609 (DQKSNQNSSTPYKQSQRQVPHSIK) is disordered. Residues 587 to 609 (QKSNQNSSTPYKQSQRQVPHSIK) are compositionally biased toward polar residues.

The protein belongs to the MPC70 family. Interacts directly with MPC54, NUD1 and SPC42. Interacts with ADY3. Interacts with ADY4. Probable component of a SPB complex composed of ADY3, SSP1, DON1, MPC54, SPO21/MPC70, NUD1 and CNM67.

It is found in the prospore membrane. The protein localises to the cytoplasm. It localises to the cytoskeleton. The protein resides in the spindle pole. Functionally, involved in the pathway that organizes the shaping and sizing of the prospore membrane (PSM) during sporulation. May provide a meiosis-specific scaffold for the assembly of other proteins on spindle pole bodies (SPBs), and may be a limiting component for SPB formation. The protein is Sporulation-specific protein 21 (SPO21) of Saccharomyces cerevisiae (strain ATCC 204508 / S288c) (Baker's yeast).